We begin with the raw amino-acid sequence, 329 residues long: Src kinase-associated phosphoprotein 2 (329 aa).

The tract at residues 58 to 95 (YAEDSEEEEDWDSNEGGSLQSERTDKDEEACEGAQQAP) is disordered. Over residues 61–70 (DSEEEEDWDS) the composition is skewed to acidic residues. The 104-residue stretch at 104–207 (SVFKAGYLEK…WVKQIDFVLK (104 aa)) folds into the PH domain. The tract at residues 240 to 263 (EDMPSPPPKVEPVSKHPPPTPAVD) is disordered. Pro residues predominate over residues 243 to 260 (PSPPPKVEPVSKHPPPTP). One can recognise an SH3 domain in the interval 267–328 (DYANYYQGLW…PKDYLMELYA (62 aa)).

Belongs to the SKAP family. Phosphorylated on tyrosines.

The protein localises to the cytoplasm. Functionally, may be involved in B-cell and macrophage adhesion processes. May play a role in src signaling pathway. This is Src kinase-associated phosphoprotein 2 (skap2) from Takifugu rubripes (Japanese pufferfish).